The chain runs to 350 residues: Twinfilin-1 (350 aa).

An N-acetylserine modification is found at serine 2. Residues 2–139 (SHQTGIQASE…SLHGYKKYLL (138 aa)) form the ADF-H 1 domain. 2 positions are modified to phosphoserine: serine 143 and serine 277. The ADF-H 2 domain maps to 177–313 (GVAFPISQEA…TADFLYEEVH (137 aa)). At tyrosine 309 the chain carries Phosphotyrosine. A disordered region spans residues 316-350 (QHAHKQSFAKPKGPSGKRGIRRIIRGPAETEATTE). A Phosphothreonine modification is found at threonine 349.

It belongs to the actin-binding proteins ADF family. Twinfilin subfamily. In terms of assembly, interacts with G-actin; ADP-actin form and capping protein (CP). May also be able to interact with TWF2 and phosphoinositides, PI(4,5)P2. When bound to PI(4,5)P2, it is down-regulated. Interacts with ACTG1. Post-translationally, phosphorylated on serine and threonine residues.

The protein localises to the cytoplasm. It is found in the cytoskeleton. Its function is as follows. Actin-binding protein involved in motile and morphological processes. Inhibits actin polymerization, likely by sequestering G-actin. By capping the barbed ends of filaments, it also regulates motility. Seems to play an important role in clathrin-mediated endocytosis and distribution of endocytic organelles. The chain is Twinfilin-1 (TWF1) from Bos taurus (Bovine).